Consider the following 1366-residue polypeptide: Collagen alpha-2(I) chain (1366 aa).

The N-terminal stretch at 1 to 22 (MLSFVDTRTLLLLAVTLCLATC) is a signal peptide. Gln-23 bears the Pyrrolidone carboxylic acid mark. Residues 23–79 (QSLQEETVRKGPAGDRGPRGERGPPGPPGRDGEDGPTGPPGPPGPPGPPGLGGNFAA) constitute a propeptide, N-terminal propeptide. Positions 28–44 (ETVRKGPAGDRGPRGER) are enriched in basic and acidic residues. Residues 28-1130 (ETVRKGPAGD…QPRSAPSLRP (1103 aa)) form a disordered region. 6 positions are modified to 4-hydroxyproline: Pro-47, Pro-50, Pro-62, Pro-65, Pro-68, and Pro-71. A compositionally biased stretch (pro residues) spans 59 to 71 (TGPPGPPGPPGPP). Position 80 is a pyrrolidone carboxylic acid (Gln-80). The residue at position 84 (Lys-84) is an Allysine. A compositionally biased stretch (gly residues) spans 84–94 (KGVGLGPGPMG). Residues 95-140 (LMGPRGPPGAAGAPGPQGFQGPAGEPGEPGQTGPAGARGPAGPPGK) are compositionally biased toward low complexity. Residues Pro-102 and Pro-108 each carry the 4-hydroxyproline modification. Basic and acidic residues predominate over residues 141-155 (AGEDGHPGKPGRPGE). Residue Lys-177 is modified to 5-hydroxylysine; alternate. O-linked (Gal...) hydroxylysine; alternate glycosylation is present at Lys-177. Low complexity-rich tracts occupy residues 225 to 254 (VGAPGPAGARGSDGSVGPVGPAGPIGSAGP), 269 to 293 (AVGNAGPAGPAGPRGEVGLPGLSGP), 300 to 321 (PGANGLTGAKGAAGLPGVAGAP), 330 to 345 (PGPVGAAGATGARGLV), 398 to 410 (LRGSPGSRGLPGA), and 419 to 434 (PPGSRGASGPAGVRGP). Residues Pro-420, Pro-441, and Pro-444 each carry the 4-hydroxyproline modification. Composition is skewed to low complexity over residues 470–489 (LPGIDGRPGPIGPAGARGEP) and 513–531 (AGLAGARGAPGPDGNNGAQ). Residues 538 to 547 (GVQGGKGEQG) are compositionally biased toward gly residues. 4 stretches are compositionally biased toward low complexity: residues 594–611 (PGESGAAGPTGPIGSRGP), 623–648 (EPGVVGAVGTAGPSGPSGLPGERGAA), 663–710 (RGEI…PRGS), and 717–737 (VGPAGPNGFAGPAGAAGQPGA). Positions 738-747 (KGERGAKGPK) are enriched in basic and acidic residues. Over residues 752–765 (VVGPTGPVGAAGPA) the composition is skewed to low complexity. Positions 775-784 (GSRGDGGPPG) are enriched in gly residues. 5 stretches are compositionally biased toward low complexity: residues 786-795 (TGFPGAAGRT), 849-876 (SGEAGTAGPPGTPGPQGLLGAPGILGLP), 884-932 (LPGV…NPGN), 956-974 (PVGAAGAPGPHGPVGPAGK), and 983-1001 (PSGPVGPAGAVGPRGPSGP). Residues 1005–1016 (RGDKGEPGEKGP) show a composition bias toward basic and acidic residues. Residues 1089 to 1101 (AGPPGPPGPPGPP) are compositionally biased toward pro residues. A propeptide spans 1120–1366 (DQPRSAPSLR…FVDIGPVCFK (247 aa)) (C-terminal propeptide). The 234-residue stretch at 1133–1366 (YEVDATLKSL…FVDIGPVCFK (234 aa)) folds into the Fibrillar collagen NC1 domain. Intrachain disulfides connect Cys-1163-Cys-1195, Cys-1203-Cys-1364, and Cys-1272-Cys-1317. 5 residues coordinate Ca(2+): Asp-1181, Asn-1183, Gln-1184, Cys-1186, and Asp-1189. N-linked (GlcNAc...) asparagine glycosylation is present at Asn-1267.

This sequence belongs to the fibrillar collagen family. In terms of assembly, trimers of one alpha 2(I) and two alpha 1(I) chains. Interacts (via C-terminus) with TMEM131 (via PapD-L domain); the interaction is direct and is involved in assembly and TRAPPIII ER-to-Golgi transport complex-dependent secretion of collagen. In terms of processing, prolines at the third position of the tripeptide repeating unit (G-X-Y) are hydroxylated in some or all of the chains. As to expression, forms the fibrils of tendon, ligaments and bones. In bones the fibrils are mineralized with calcium hydroxyapatite.

It localises to the secreted. Its subcellular location is the extracellular space. It is found in the extracellular matrix. Type I collagen is a member of group I collagen (fibrillar forming collagen). The polypeptide is Collagen alpha-2(I) chain (COL1A2) (Homo sapiens (Human)).